The chain runs to 455 residues: Ribulose bisphosphate carboxylase large chain (455 aa).

Residue lysine 5 is modified to N6,N6,N6-trimethyllysine. 2 residues coordinate substrate: asparagine 114 and threonine 164. Catalysis depends on lysine 166, which acts as the Proton acceptor. A substrate-binding site is contributed by lysine 168. Residues lysine 192, aspartate 194, and glutamate 195 each contribute to the Mg(2+) site. Lysine 192 bears the N6-carboxylysine mark. The Proton acceptor role is filled by histidine 285. Arginine 286, histidine 318, and serine 370 together coordinate substrate.

It belongs to the RuBisCO large chain family. Type I subfamily. In terms of assembly, heterohexadecamer of 8 large chains and 8 small chains; disulfide-linked. The disulfide link is formed within the large subunit homodimers. The cofactor is Mg(2+). In terms of processing, the disulfide bond which can form in the large chain dimeric partners within the hexadecamer appears to be associated with oxidative stress and protein turnover.

It localises to the plastid. The protein resides in the chloroplast. The catalysed reaction is 2 (2R)-3-phosphoglycerate + 2 H(+) = D-ribulose 1,5-bisphosphate + CO2 + H2O. It carries out the reaction D-ribulose 1,5-bisphosphate + O2 = 2-phosphoglycolate + (2R)-3-phosphoglycerate + 2 H(+). Its function is as follows. RuBisCO catalyzes two reactions: the carboxylation of D-ribulose 1,5-bisphosphate, the primary event in carbon dioxide fixation, as well as the oxidative fragmentation of the pentose substrate in the photorespiration process. Both reactions occur simultaneously and in competition at the same active site. This Lupinus microcarpus var. densiflorus (Whitewhorl lupine) protein is Ribulose bisphosphate carboxylase large chain.